We begin with the raw amino-acid sequence, 281 residues long: Secretory carrier-associated membrane protein 5 (281 aa).

The segment at 1-49 is disordered; that stretch reads MHHDPNPFDEGADDNPFSNGGGGGARRGGGGGGGGGGGGGKSQFSFGFG. Topologically, residues 1 to 139 are cytoplasmic; it reads MHHDPNPFDE…AQKLQYLAFA (139 aa). Over residues 19–49 the composition is skewed to gly residues; sequence NGGGGGARRGGGGGGGGGGGGGKSQFSFGFG. The stretch at 76–102 forms a coiled coil; the sequence is KELLQWEADLKRREADIRRREEALKSA. 4 helical membrane passes run 140–160, 167–187, 202–222, and 250–270; these read SWLG…VCWI, LFFL…LMWY, FGWF…AAIA, and IFYF…IWVL. Residues 271-281 lie on the Cytoplasmic side of the membrane; that stretch reads QKVYMYFRGHK.

Belongs to the SCAMP family.

The protein resides in the cell membrane. Its subcellular location is the cytoplasmic vesicle. The protein localises to the secretory vesicle membrane. In terms of biological role, probably involved in membrane trafficking. This Oryza sativa subsp. japonica (Rice) protein is Secretory carrier-associated membrane protein 5 (SCAMP5).